A 294-amino-acid chain; its full sequence is Deubiquitinase OTUD6B (294 aa).

The disordered stretch occupies residues 85–120 (VTSLDLGSEEPVQQPRVSKAQKRREKKAAQEKERDD). Residues 111 to 120 (KAAQEKERDD) show a composition bias toward basic and acidic residues. The OTU domain maps to 150-287 (LQIRQIPSDG…GEHYNSVEQL (138 aa)). The tract at residues 155-161 (IPSDGHC) is cys-loop. The active site involves D158. C161 acts as the Nucleophile in catalysis. Residues 222–232 (IVNTPAWGGQL) are variable-loop. The tract at residues 270 to 280 (YMRHAYGLGEH) is his-loop. Residue H280 is part of the active site.

It catalyses the reaction Thiol-dependent hydrolysis of ester, thioester, amide, peptide and isopeptide bonds formed by the C-terminal Gly of ubiquitin (a 76-residue protein attached to proteins as an intracellular targeting signal).. Its function is as follows. Deubiquitinating enzyme that may play a role in the ubiquitin-dependent regulation of different cellular processes. The protein is Deubiquitinase OTUD6B (otud6b) of Xenopus laevis (African clawed frog).